Reading from the N-terminus, the 316-residue chain is Lipoyl synthase (316 aa).

Basic and acidic residues predominate over residues 1–15 (MKARNESMSKGEYKT). The disordered stretch occupies residues 1 to 33 (MKARNESMSKGEYKTKSLKNRPDPTQPKLKKPS). Residues cysteine 64, cysteine 69, cysteine 75, cysteine 90, cysteine 94, cysteine 97, and serine 304 each coordinate [4Fe-4S] cluster. Residues 76 to 293 (FGHGTATFMI…EQAGMEMGFT (218 aa)) form the Radical SAM core domain.

It belongs to the radical SAM superfamily. Lipoyl synthase family. [4Fe-4S] cluster serves as cofactor.

The protein localises to the cytoplasm. The enzyme catalyses [[Fe-S] cluster scaffold protein carrying a second [4Fe-4S](2+) cluster] + N(6)-octanoyl-L-lysyl-[protein] + 2 oxidized [2Fe-2S]-[ferredoxin] + 2 S-adenosyl-L-methionine + 4 H(+) = [[Fe-S] cluster scaffold protein] + N(6)-[(R)-dihydrolipoyl]-L-lysyl-[protein] + 4 Fe(3+) + 2 hydrogen sulfide + 2 5'-deoxyadenosine + 2 L-methionine + 2 reduced [2Fe-2S]-[ferredoxin]. Its pathway is protein modification; protein lipoylation via endogenous pathway; protein N(6)-(lipoyl)lysine from octanoyl-[acyl-carrier-protein]: step 2/2. Catalyzes the radical-mediated insertion of two sulfur atoms into the C-6 and C-8 positions of the octanoyl moiety bound to the lipoyl domains of lipoate-dependent enzymes, thereby converting the octanoylated domains into lipoylated derivatives. The chain is Lipoyl synthase from Hydrogenovibrio crunogenus (strain DSM 25203 / XCL-2) (Thiomicrospira crunogena).